The sequence spans 217 residues: MVMTLYKLDASPPARAVMMVIEALKIPDVEYIDVNLLEGSHLSEEFTKMNPQHTVPLLKDDDFLVWDSHAIAGYLVSKYGADDSLYPTDPKKRAIVDQRLHFDSGILFPALRGSLEPVIFWGETAFRPECLEKVRKGYDFAEKFLTSTWMAGEEFTVADICCVASISTMNDIIVPIDENTYPKLSAWLERCSQLDVYKKKNAPGNDLCKDLVASKLS.

The GST N-terminal domain maps to 1–83 (MVMTLYKLDA…YLVSKYGADD (83 aa)). Residues Ser11, 53 to 55 (HTV), and 67 to 69 (DSH) each bind glutathione. The GST C-terminal domain occupies 89–211 (DPKKRAIVDQ…APGNDLCKDL (123 aa)).

It belongs to the GST superfamily. Theta family. In terms of assembly, homodimer.

It carries out the reaction RX + glutathione = an S-substituted glutathione + a halide anion + H(+). Functionally, conjugation of reduced glutathione to a wide number of exogenous and endogenous hydrophobic electrophiles. The polypeptide is Glutathione S-transferase 1 (GST1) (Manduca sexta (Tobacco hawkmoth)).